Here is a 267-residue protein sequence, read N- to C-terminus: Transcription factor LBX1 (267 aa).

A compositionally biased stretch (basic and acidic residues) spans methionine 1–alanine 21. The interval methionine 1 to threonine 36 is disordered. The segment at residues arginine 127–leucine 186 is a DNA-binding region (homeobox). Positions serine 211 to aspartate 267 are disordered. Residues proline 228–methionine 237 are compositionally biased toward polar residues. A compositionally biased stretch (acidic residues) spans serine 255 to aspartate 267.

In terms of tissue distribution, expressed in all myoblasts that will populate body wall muscles as well as in a group of cells the migrate into the head.

It localises to the nucleus. Its function is as follows. Transcription factor that controls hypaxial muscle development by down-regulating myod1 and cdkn1b/p27, thereby allowing myoblasts to proliferate before the onset of terminal differentiation. The protein is Transcription factor LBX1 of Xenopus laevis (African clawed frog).